Here is a 274-residue protein sequence, read N- to C-terminus: Thiamine kinase (274 aa).

This sequence belongs to the thiamine kinase family.

The enzyme catalyses thiamine + ATP = thiamine phosphate + ADP + H(+). It participates in cofactor biosynthesis; thiamine diphosphate biosynthesis; thiamine phosphate from thiamine: step 1/1. Catalyzes the ATP-dependent phosphorylation of thiamine to thiamine phosphate. Is involved in thiamine salvage. This chain is Thiamine kinase, found in Salmonella paratyphi A (strain ATCC 9150 / SARB42).